The primary structure comprises 235 residues: Glucosamine-6-phosphate deaminase (235 aa).

Asp62 acts as the Proton acceptor; for enolization step in catalysis. Residue Asn128 is the For ring-opening step of the active site. His130 functions as the Proton acceptor; for ring-opening step in the catalytic mechanism. Catalysis depends on Glu135, which acts as the For ring-opening step.

This sequence belongs to the glucosamine/galactosamine-6-phosphate isomerase family. NagB subfamily.

The enzyme catalyses alpha-D-glucosamine 6-phosphate + H2O = beta-D-fructose 6-phosphate + NH4(+). Its pathway is amino-sugar metabolism; N-acetylneuraminate degradation; D-fructose 6-phosphate from N-acetylneuraminate: step 5/5. Catalyzes the reversible isomerization-deamination of glucosamine 6-phosphate (GlcN6P) to form fructose 6-phosphate (Fru6P) and ammonium ion. The chain is Glucosamine-6-phosphate deaminase from Streptococcus pneumoniae (strain JJA).